A 278-amino-acid chain; its full sequence is Phosphatidylglycerol--prolipoprotein diacylglyceryl transferase (278 aa).

Helical transmembrane passes span 21-41, 54-74, and 88-108; these read WYGIIIAMGILLGYFIAQASV, IIFWSAIFGFIIARIYFVIFQ, and IWQGGIAIHGGLIGGFVTGII. Residue Arg-136 coordinates a 1,2-diacyl-sn-glycero-3-phospho-(1'-sn-glycerol). The next 3 membrane-spanning stretches (helical) occupy residues 176–196, 202–222, and 234–254; these read QPTFLYESIWDVLGFVILILL, IGDTFCLYLIWYSIGRFFVEG, and IRIAQLMSIILIIIGVVIMIV.

The protein belongs to the Lgt family.

Its subcellular location is the cell membrane. It carries out the reaction L-cysteinyl-[prolipoprotein] + a 1,2-diacyl-sn-glycero-3-phospho-(1'-sn-glycerol) = an S-1,2-diacyl-sn-glyceryl-L-cysteinyl-[prolipoprotein] + sn-glycerol 1-phosphate + H(+). The protein operates within protein modification; lipoprotein biosynthesis (diacylglyceryl transfer). Catalyzes the transfer of the diacylglyceryl group from phosphatidylglycerol to the sulfhydryl group of the N-terminal cysteine of a prolipoprotein, the first step in the formation of mature lipoproteins. This Staphylococcus saprophyticus subsp. saprophyticus (strain ATCC 15305 / DSM 20229 / NCIMB 8711 / NCTC 7292 / S-41) protein is Phosphatidylglycerol--prolipoprotein diacylglyceryl transferase.